The chain runs to 356 residues: Terpene synthase 10 (356 aa).

A DDxx(x)D/E motif motif is present at residues 90 to 95 (DDYLDS). Residues 232 to 240 (NDAVSYAKE) carry the NDxxSxxxD/E motif motif.

The protein belongs to the terpene synthase family.

The enzyme catalyses geranylgeranyl diphosphate = beta-araneosene + diphosphate. Terpene synthase that converts its substrate farnesyl diphosphate (FPP) into several unidentified sesquiterpenes. TPS10 also converts geranylgeranyl diphosphate (GGPP) into the diterpene beta-araneosene. The sequence is that of Terpene synthase 10 from Dictyostelium purpureum (Slime mold).